A 202-amino-acid polypeptide reads, in one-letter code: Probable chemoreceptor glutamine deamidase CheD 2 (202 aa).

The protein belongs to the CheD family.

It catalyses the reaction L-glutaminyl-[protein] + H2O = L-glutamyl-[protein] + NH4(+). Functionally, probably deamidates glutamine residues to glutamate on methyl-accepting chemotaxis receptors (MCPs), playing an important role in chemotaxis. This chain is Probable chemoreceptor glutamine deamidase CheD 2, found in Shewanella oneidensis (strain ATCC 700550 / JCM 31522 / CIP 106686 / LMG 19005 / NCIMB 14063 / MR-1).